The chain runs to 815 residues: 1,4-alpha-glucan branching enzyme GlgB (815 aa).

The Nucleophile role is filled by Asp405. The active-site Proton donor is Glu458.

It belongs to the glycosyl hydrolase 13 family. GlgB subfamily. As to quaternary structure, monomer.

It carries out the reaction Transfers a segment of a (1-&gt;4)-alpha-D-glucan chain to a primary hydroxy group in a similar glucan chain.. Its pathway is glycan biosynthesis; glycogen biosynthesis. Its function is as follows. Catalyzes the formation of the alpha-1,6-glucosidic linkages in glycogen by scission of a 1,4-alpha-linked oligosaccharide from growing alpha-1,4-glucan chains and the subsequent attachment of the oligosaccharide to the alpha-1,6 position. This Histophilus somni (strain 2336) (Haemophilus somnus) protein is 1,4-alpha-glucan branching enzyme GlgB.